The primary structure comprises 202 residues: Hydrogenase expression/formation protein HupD (202 aa).

Residues Glu28, Asp74, and His105 each contribute to the Ni(2+) site.

Belongs to the peptidase A31 family.

Functionally, not known. Could be involved in the processing of hydrogenase. In Rhizobium leguminosarum bv. viciae, this protein is Hydrogenase expression/formation protein HupD (hupD).